A 919-amino-acid chain; its full sequence is MDYKDTLLLPTTKFEMRGNLINNEPIRYASWDEKKIYEKMKKNRKNAQSFTLHDGPPYANGHTHIGHALNKILKDIIVKHNYFSGKSVRFTPGWDCHGLPIEQQVEKKLGGKQKKELLEKAKIRELCRAHAAEFVDIQREEFKKLGVIADWENPYVTMDFKFEANIYRTLCNVAKKGLLIERSKPVFWSWAERTALAEAEVEYEDKEDYSIFIAFELSDEAKAKLSINSKAALVIWTTTPWTIPANTGISLNPEEEYILTTTGYIVAKKLLSSLNESKILSGDIAQTFKAKEFENLLALNPLNGRTSRIVLGEHVLVENGTGCVHTAPGHGEDDYRIGLVYDLEVVMPVDETGCYDETIVRDGLIPNAEDFLGRHIFKSNEDLITLMGESVVHVSKFKHSYPHCWRSHTPLIFRATKQWFISVDEKPSGSDKTLRDIALSEVEKTLFFPETGRNRLKSMVANRPDWCISRQRDWGVPIAFFRVKATGEVLLDEKVLNFTAMVFEMHGSDAWYSMPTEQLLYPGAGYSADELEKVTDILDVWFDSGSTWYSVLKSRNYDAGEFQADLYVEGSDQHRGWFQSSMFLSAAVEHKAPYKGVLTHGFTVDEKGEKMSKSKGNVVAPETVLKEYGSEILRLWVASSDYQGDLKISQSILKQSAENYRKLRNTFRIMLANINDLHALTPYEKMGELDKWILNEAKSVFDGVHKSFSNYNFVNGMSLLNNFIVNELSGIYIDITKDSLYCDAKDDARRTSSQSAMALIVKSLLTLIAPILTYTADEIVEYLPEVIRESKEDIFDFVHKNIDVAESGFNTDYMYAAREKFYEIVDGLKKEKIIKNTLELVIVTESKKIAEMDKTAAEDWFVVSGISHSEVIAELGKFEVDGSIFVIQKATAAKCPRCWKYQAKDETATCTRCSKVLNA.

The 'HIGH' region motif lies at 57–67; it reads PYANGHTHIGH. E569 contacts L-isoleucyl-5'-AMP. The 'KMSKS' region signature appears at 610–614; the sequence is KMSKS. Residue K613 coordinates ATP. Zn(2+)-binding residues include C895, C898, C910, and C913.

It belongs to the class-I aminoacyl-tRNA synthetase family. IleS type 1 subfamily. Monomer. Zn(2+) is required as a cofactor.

Its subcellular location is the cytoplasm. It carries out the reaction tRNA(Ile) + L-isoleucine + ATP = L-isoleucyl-tRNA(Ile) + AMP + diphosphate. Catalyzes the attachment of isoleucine to tRNA(Ile). As IleRS can inadvertently accommodate and process structurally similar amino acids such as valine, to avoid such errors it has two additional distinct tRNA(Ile)-dependent editing activities. One activity is designated as 'pretransfer' editing and involves the hydrolysis of activated Val-AMP. The other activity is designated 'posttransfer' editing and involves deacylation of mischarged Val-tRNA(Ile). This chain is Isoleucine--tRNA ligase, found in Sulfurimonas denitrificans (strain ATCC 33889 / DSM 1251) (Thiomicrospira denitrificans (strain ATCC 33889 / DSM 1251)).